The sequence spans 215 residues: Porin MspC (215 aa).

Residues 1 to 31 form the signal peptide; sequence MKAISRVLIAMISALAAAVAGLFVSAGTSHA.

It belongs to the mycobacterial porin (TC 1.B.24) family. As to quaternary structure, octamers. Probably forms a goblet with the wide end on the exterior of the outer membrane and a central channel. It is not known if mixed oligomers of MspC with other Msp subunits form in vivo.

The protein resides in the cell outer membrane. It localises to the secreted. It is found in the cell wall. In terms of biological role, a constitutively expressed secondary porin, forms a water-filled channel which favors the permeation of cations and less efficiently phosphate. There are about 2400 porins in wild-type, 800 in an mspA deletion and 150 in a double mspA-mspC deletion. This chain is Porin MspC (mspC), found in Mycolicibacterium smegmatis (strain ATCC 700084 / mc(2)155) (Mycobacterium smegmatis).